We begin with the raw amino-acid sequence, 420 residues long: UDP-N-acetylglucosamine 1-carboxyvinyltransferase (420 aa).

22–23 is a binding site for phosphoenolpyruvate; sequence KN. Arginine 93 contacts UDP-N-acetyl-alpha-D-glucosamine. Residue cysteine 117 is the Proton donor of the active site. Position 117 is a 2-(S-cysteinyl)pyruvic acid O-phosphothioketal (cysteine 117). The UDP-N-acetyl-alpha-D-glucosamine site is built by aspartate 307 and isoleucine 329.

This sequence belongs to the EPSP synthase family. MurA subfamily.

It is found in the cytoplasm. The enzyme catalyses phosphoenolpyruvate + UDP-N-acetyl-alpha-D-glucosamine = UDP-N-acetyl-3-O-(1-carboxyvinyl)-alpha-D-glucosamine + phosphate. It participates in cell wall biogenesis; peptidoglycan biosynthesis. Functionally, cell wall formation. Adds enolpyruvyl to UDP-N-acetylglucosamine. This Saccharophagus degradans (strain 2-40 / ATCC 43961 / DSM 17024) protein is UDP-N-acetylglucosamine 1-carboxyvinyltransferase.